A 229-amino-acid chain; its full sequence is Large ribosomal subunit protein uL4 (229 aa).

The interval 62 to 103 (SRRQGTHQVKNRAAVSGSGKKPWKQKGTGRARHSSRRSPIWV) is disordered. Positions 82–97 (KPWKQKGTGRARHSSR) are enriched in basic residues.

It belongs to the universal ribosomal protein uL4 family. In terms of assembly, part of the 50S ribosomal subunit.

One of the primary rRNA binding proteins, this protein initially binds near the 5'-end of the 23S rRNA. It is important during the early stages of 50S assembly. It makes multiple contacts with different domains of the 23S rRNA in the assembled 50S subunit and ribosome. Its function is as follows. Forms part of the polypeptide exit tunnel. The chain is Large ribosomal subunit protein uL4 from Mycoplasmopsis synoviae (strain 53) (Mycoplasma synoviae).